A 329-amino-acid polypeptide reads, in one-letter code: Fructose-1,6-bisphosphatase class 1 (329 aa).

Mg(2+) is bound by residues E84, D103, L105, and D106. Residues 106-109 (DGSS), N196, and K262 contribute to the substrate site. E268 is a Mg(2+) binding site.

It belongs to the FBPase class 1 family. As to quaternary structure, homotetramer. The cofactor is Mg(2+).

It localises to the cytoplasm. The catalysed reaction is beta-D-fructose 1,6-bisphosphate + H2O = beta-D-fructose 6-phosphate + phosphate. It functions in the pathway carbohydrate biosynthesis; gluconeogenesis. The chain is Fructose-1,6-bisphosphatase class 1 from Shewanella loihica (strain ATCC BAA-1088 / PV-4).